Here is a 332-residue protein sequence, read N- to C-terminus: Aspartate carbamoyltransferase catalytic subunit (332 aa).

Carbamoyl phosphate contacts are provided by Arg-78 and Thr-79. Lys-106 contacts L-aspartate. Positions 128, 156, and 159 each coordinate carbamoyl phosphate. L-aspartate-binding residues include Arg-189 and Arg-243. Residues Gly-284 and Pro-285 each coordinate carbamoyl phosphate.

The protein belongs to the aspartate/ornithine carbamoyltransferase superfamily. ATCase family. As to quaternary structure, heterododecamer (2C3:3R2) of six catalytic PyrB chains organized as two trimers (C3), and six regulatory PyrI chains organized as three dimers (R2).

It carries out the reaction carbamoyl phosphate + L-aspartate = N-carbamoyl-L-aspartate + phosphate + H(+). It functions in the pathway pyrimidine metabolism; UMP biosynthesis via de novo pathway; (S)-dihydroorotate from bicarbonate: step 2/3. In terms of biological role, catalyzes the condensation of carbamoyl phosphate and aspartate to form carbamoyl aspartate and inorganic phosphate, the committed step in the de novo pyrimidine nucleotide biosynthesis pathway. This is Aspartate carbamoyltransferase catalytic subunit from Caulobacter vibrioides (strain ATCC 19089 / CIP 103742 / CB 15) (Caulobacter crescentus).